Reading from the N-terminus, the 255-residue chain is Small ribosomal subunit protein uS2 (255 aa).

Positions 230–255 (QSSSGRDLGASSEVPVEPALEEAAEG) are disordered.

It belongs to the universal ribosomal protein uS2 family.

The sequence is that of Small ribosomal subunit protein uS2 from Rhizobium leguminosarum bv. trifolii (strain WSM2304).